A 122-amino-acid polypeptide reads, in one-letter code: Small ribosomal subunit protein uS12cz/uS12cy (122 aa).

Belongs to the universal ribosomal protein uS12 family. In terms of assembly, part of the 30S ribosomal subunit.

The protein resides in the plastid. It is found in the chloroplast. Functionally, with S4 and S5 plays an important role in translational accuracy. Located at the interface of the 30S and 50S subunits. This is Small ribosomal subunit protein uS12cz/uS12cy (rps12-A) from Triticum aestivum (Wheat).